Consider the following 373-residue polypeptide: Zn(2)-C6 fungal-type transcription factor afumD (373 aa).

The tract at residues 1 to 48 (MLDRSKMTSAIPDSNSSSSPRGHNQSERDSYNRKKRKGPRLAHRKSRT) is disordered. Basic residues predominate over residues 33 to 48 (RKKRKGPRLAHRKSRT). Residues 50–77 (CQRCRARRVKCDESRPVCRDCHRHGIPC) constitute a DNA-binding region (zn(2)-C6 fungal-type). The interval 86 to 110 (GAIPPSTGIQSRPLEPSPSDPSNDA) is disordered.

The protein resides in the nucleus. Zn(2)-C6 fungal-type transcription factor; part of the gene cluster that mediates the biosynthesis fumihopaside A, a hopane-type glucoside that enhances the thermotolerance and UV resistance of N.fumigata. This chain is Zn(2)-C6 fungal-type transcription factor afumD, found in Aspergillus fumigatus (strain CBS 144.89 / FGSC A1163 / CEA10) (Neosartorya fumigata).